A 150-amino-acid chain; its full sequence is Transcriptional repressor NrdR (150 aa).

The segment at 3 to 33 (CPYCTGESAVIDTRELDNGETIRRRRRCKHC) is a zinc-finger region. The ATP-cone domain occupies 48-138 (VMVVKKNGDR…VYRSFSDLGK (91 aa)).

Belongs to the NrdR family. The cofactor is Zn(2+).

Its function is as follows. Negatively regulates transcription of bacterial ribonucleotide reductase nrd genes and operons by binding to NrdR-boxes. In Herpetosiphon aurantiacus (strain ATCC 23779 / DSM 785 / 114-95), this protein is Transcriptional repressor NrdR.